The sequence spans 118 residues: Thioredoxin AMT13 (118 aa).

The Thioredoxin domain maps to Met-1–Gly-110. Residues Cys-36 and Cys-39 are joined by a disulfide bond.

Belongs to the thioredoxin family.

It functions in the pathway mycotoxin biosynthesis. Its function is as follows. Thioredoxin; part of the gene clusters that mediate the biosynthesis of AM-toxins, host-selective toxins (HSTs) causing Alternaria blotch on apple, a worldwide distributed disease. AM-toxins are cyclic depsipeptides containing the 3 residues 2-hydroxy-isovaleric acid (2-HIV), dehydroalanine, L-alanine which are common for all 3 AM-toxins I to III. The fourth precursor is L-alpha-amino-methoxyphenyl-valeric acid (L-Amv) for AM-toxin I, L-alpha-amino-phenyl-valeric acid (L-Apv) for AM-toxin II, and L-alpha-amino-hydroxyphenyl-valeric acid (L-Ahv) for AM-toxin III. AM-toxins have two target sites for affecting susceptible apple cells; they cause invagination of the plasma membrane and electrolyte loss and chloroplast disorganization. The non-ribosomal peptide synthetase AMT1 contains 4 catalytic modules and is responsible for activation of each residue in AM-toxin. The aldo-keto reductase AMT2 catalyzes the conversion of 2-keto-isovaleric acid (2-KIV) to 2-hydroxy-isovaleric acid (2-HIV), one of the precursor residues incorporated by AMT1 during AM-toxin biosynthesis, by reduction of its ketone to an alcohol. The cytochrome P450 monooxygenase AMT3 and the thioesterase AMT4 are also important for AM-toxin production, but their exact function within the AM-toxin biosynthesis are not known yet. Up to 21 proteins (including AMT1 to AMT4) are predicted to be involved in AM-toxin biosynthesis since their expression ishighly up-regulated in AM-toxin-producing cultures. This is Thioredoxin AMT13 from Alternaria alternata (Alternaria rot fungus).